A 472-amino-acid chain; its full sequence is Poly(A) polymerase catalytic subunit (472 aa).

Active-site residues include Asp-194 and Asp-196.

Belongs to the poxviridae poly(A) polymerase catalytic subunit family. Heterodimer of a large (catalytic) subunit and a small (regulatory) subunit.

The enzyme catalyses RNA(n) + ATP = RNA(n)-3'-adenine ribonucleotide + diphosphate. Polymerase that creates the 3'-poly(A) tail of mRNA's. This Serinus (CNPV) protein is Poly(A) polymerase catalytic subunit (PAPL).